The following is a 190-amino-acid chain: Shikimate kinase (190 aa).

26–31 (GSGKST) contacts ATP. A Mg(2+)-binding site is contributed by serine 30. The substrate site is built by aspartate 48, arginine 72, and glycine 94. Arginine 133 contributes to the ATP binding site. A substrate-binding site is contributed by arginine 152.

The protein belongs to the shikimate kinase family. Monomer. Requires Mg(2+) as cofactor.

The protein localises to the cytoplasm. It catalyses the reaction shikimate + ATP = 3-phosphoshikimate + ADP + H(+). It functions in the pathway metabolic intermediate biosynthesis; chorismate biosynthesis; chorismate from D-erythrose 4-phosphate and phosphoenolpyruvate: step 5/7. Its function is as follows. Catalyzes the specific phosphorylation of the 3-hydroxyl group of shikimic acid using ATP as a cosubstrate. This is Shikimate kinase from Prochlorococcus marinus (strain SARG / CCMP1375 / SS120).